A 282-amino-acid chain; its full sequence is Bis(5'-nucleosyl)-tetraphosphatase, symmetrical (282 aa).

This sequence belongs to the Ap4A hydrolase family.

It carries out the reaction P(1),P(4)-bis(5'-adenosyl) tetraphosphate + H2O = 2 ADP + 2 H(+). In terms of biological role, hydrolyzes diadenosine 5',5'''-P1,P4-tetraphosphate to yield ADP. The polypeptide is Bis(5'-nucleosyl)-tetraphosphatase, symmetrical (Escherichia coli O45:K1 (strain S88 / ExPEC)).